A 525-amino-acid chain; its full sequence is GMP synthase [glutamine-hydrolyzing] (525 aa).

One can recognise a Glutamine amidotransferase type-1 domain in the interval 9-207 (RILILDFGSQ…VSDICGCEKQ (199 aa)). Residue Cys-86 is the Nucleophile of the active site. Catalysis depends on residues His-181 and Glu-183. A GMPS ATP-PPase domain is found at 208-400 (WTPAKIIDDA…LGLPYNMLYR (193 aa)). Residue 235–241 (SGGVDSS) coordinates ATP.

As to quaternary structure, homodimer.

The catalysed reaction is XMP + L-glutamine + ATP + H2O = GMP + L-glutamate + AMP + diphosphate + 2 H(+). Its pathway is purine metabolism; GMP biosynthesis; GMP from XMP (L-Gln route): step 1/1. Its function is as follows. Catalyzes the synthesis of GMP from XMP. The polypeptide is GMP synthase [glutamine-hydrolyzing] (Idiomarina loihiensis (strain ATCC BAA-735 / DSM 15497 / L2-TR)).